The primary structure comprises 342 residues: P2Y purinoceptor 12 (342 aa).

The Extracellular segment spans residues methionine 1–leucine 27. N-linked (GlcNAc...) asparagine glycosylation is found at asparagine 6 and asparagine 13. 2 cysteine pairs are disulfide-bonded: cysteine 17–cysteine 270 and cysteine 97–cysteine 175. The chain crosses the membrane as a helical span at residues phenylalanine 28–phenylalanine 50. The Cytoplasmic segment spans residues phenylalanine 51–isoleucine 61. 2 positions are modified to phosphoserine: serine 55 and serine 57. Residues phenylalanine 62–leucine 82 form a helical membrane-spanning segment. At serine 83–cysteine 97 the chain is on the extracellular side. The ADP site is built by arginine 93, cysteine 97, and tyrosine 105. Residues glutamine 98 to isoleucine 118 form a helical membrane-spanning segment. Topologically, residues threonine 119–lysine 142 are cytoplasmic. Residues isoleucine 143–leucine 162 traverse the membrane as a helical segment. ADP is bound by residues serine 156–asparagine 159, cysteine 175–lysine 179, histidine 187, and asparagine 191. Residues threonine 163 to valine 185 lie on the Extracellular side of the membrane. A helical transmembrane segment spans residues tryptophan 186–valine 207. Residues cysteine 208 to lysine 233 are Cytoplasmic-facing. A helical transmembrane segment spans residues valine 234 to tyrosine 259. ADP-binding positions include arginine 256–tyrosine 259, glutamine 263, and lysine 280. The Extracellular portion of the chain corresponds to threonine 260–tyrosine 278. Residues valine 279–tyrosine 298 traverse the membrane as a helical segment. The Cytoplasmic segment spans residues phenylalanine 299–methionine 342. Residues alanine 319–methionine 342 are disordered. Positions glycine 333 to methionine 342 are enriched in acidic residues.

This sequence belongs to the G-protein coupled receptor 1 family. Highly expressed in the platelets, lower levels in the brain. Lowest levels in the lung, appendix, pituitary and adrenal gland. Expressed in the spinal cord and in the fetal brain.

The protein localises to the cell membrane. Its function is as follows. Receptor for ADP and ATP coupled to G-proteins that inhibit the adenylyl cyclase second messenger system. Not activated by UDP and UTP. Required for normal platelet aggregation and blood coagulation. This is P2Y purinoceptor 12 (P2RY12) from Homo sapiens (Human).